The sequence spans 193 residues: Protein GrpE (193 aa).

A disordered region spans residues Met-1–Gly-26. Basic and acidic residues predominate over residues Lys-7–Ala-20.

This sequence belongs to the GrpE family. Homodimer.

Its subcellular location is the cytoplasm. Functionally, participates actively in the response to hyperosmotic and heat shock by preventing the aggregation of stress-denatured proteins, in association with DnaK and GrpE. It is the nucleotide exchange factor for DnaK and may function as a thermosensor. Unfolded proteins bind initially to DnaJ; upon interaction with the DnaJ-bound protein, DnaK hydrolyzes its bound ATP, resulting in the formation of a stable complex. GrpE releases ADP from DnaK; ATP binding to DnaK triggers the release of the substrate protein, thus completing the reaction cycle. Several rounds of ATP-dependent interactions between DnaJ, DnaK and GrpE are required for fully efficient folding. The chain is Protein GrpE from Chlorobaculum parvum (strain DSM 263 / NCIMB 8327) (Chlorobium vibrioforme subsp. thiosulfatophilum).